Reading from the N-terminus, the 473-residue chain is Cytochrome P450 716A2 (473 aa).

A helical transmembrane segment spans residues 1-21; sequence MYLTIIFLFISSIIFPLLFFL. Residue Cys-420 coordinates heme.

The protein belongs to the cytochrome P450 family. The cofactor is heme.

It is found in the membrane. Its function is as follows. Possesses triterpene oxidizing activity. Catalyzes the C28 hydroxylation of alpha-amyrin, beta-amyrin, and lupeol, producing uvaol, erythrodiol, and betulin, respectively. Catalyzes the C28 carboxylation of alpha- and beta-amyrin. Possesses 22alpha-hydroxylation activity against alpha- and beta-amaryn. This is Cytochrome P450 716A2 from Arabidopsis thaliana (Mouse-ear cress).